Here is a 141-residue protein sequence, read N- to C-terminus: 16 kDa protein (141 aa).

A disordered region spans residues 100 to 119 (TVKKSRNSKPSKKKFKERKE). A compositionally biased stretch (basic residues) spans 102 to 115 (KKSRNSKPSKKKFK).

The protein is 16 kDa protein of Tobacco rattle virus (strain PLB).